A 447-amino-acid polypeptide reads, in one-letter code: Maltoporin (447 aa).

The N-terminal stretch at 1-26 (MELRMKKVSVIAAAVAATLAAGSAFA) is a signal peptide.

The protein belongs to the porin LamB (TC 1.B.3) family. As to quaternary structure, homotrimer formed of three 18-stranded antiparallel beta-barrels, containing three independent channels.

Its subcellular location is the cell outer membrane. It catalyses the reaction beta-maltose(in) = beta-maltose(out). In terms of biological role, involved in the transport of maltose and maltodextrins. The polypeptide is Maltoporin (Vibrio campbellii (strain ATCC BAA-1116)).